Consider the following 202-residue polypeptide: IMP cyclohydrolase (202 aa).

The protein belongs to the archaeal IMP cyclohydrolase family.

It catalyses the reaction IMP + H2O = 5-formamido-1-(5-phospho-D-ribosyl)imidazole-4-carboxamide. It functions in the pathway purine metabolism; IMP biosynthesis via de novo pathway; IMP from 5-formamido-1-(5-phospho-D-ribosyl)imidazole-4-carboxamide: step 1/1. Catalyzes the cyclization of 5-formylamidoimidazole-4-carboxamide ribonucleotide to IMP. The protein is IMP cyclohydrolase of Methanosphaera stadtmanae (strain ATCC 43021 / DSM 3091 / JCM 11832 / MCB-3).